A 458-amino-acid chain; its full sequence is Elongation factor 1-alpha (458 aa).

The residue at position 2 (glycine 2) is a N,N,N-trimethylglycine. At lysine 3 the chain carries N6,N6-dimethyllysine; alternate. N6-methyllysine; alternate is present on lysine 3. The region spanning 5–240 (KTHVNVVVIG…DAIEPPQRPT (236 aa)) is the tr-type G domain. A G1 region spans residues 14 to 21 (GHVDSGKS). 14–21 (GHVDSGKS) provides a ligand contact to GTP. Residue lysine 30 is modified to N6-methyllysine. Residues 70–74 (GITID) form a G2 region. Position 79 is an N6,N6,N6-trimethyllysine (lysine 79). The tract at residues 91-94 (DAPG) is G3. GTP is bound by residues 91 to 95 (DAPGH) and 153 to 156 (NKMD). The G4 stretch occupies residues 153–156 (NKMD). Residues 192–194 (SGW) form a G5 region. N6,N6-dimethyllysine; alternate is present on lysine 316. The residue at position 316 (lysine 316) is an N6-methyllysine; alternate. N6-methyllysine is present on lysine 390.

It belongs to the TRAFAC class translation factor GTPase superfamily. Classic translation factor GTPase family. EF-Tu/EF-1A subfamily.

The protein localises to the cytoplasm. It functions in the pathway protein biosynthesis; polypeptide chain elongation. Its function is as follows. This protein promotes the GTP-dependent binding of aminoacyl-tRNA to the A-site of ribosomes during protein biosynthesis. The sequence is that of Elongation factor 1-alpha (TEF1) from Meyerozyma guilliermondii (strain ATCC 6260 / CBS 566 / DSM 6381 / JCM 1539 / NBRC 10279 / NRRL Y-324) (Yeast).